A 139-amino-acid chain; its full sequence is Probable cytochrome b5 (139 aa).

The region spanning 2–78 (SAEFTYQDVA…LEPLLVGTLK (77 aa)) is the Cytochrome b5 heme-binding domain. 2 residues coordinate heme: histidine 37 and histidine 61. A helical transmembrane segment spans residues 105–125 (GLGIGLYAVLVLGGLAGFAAY).

The protein belongs to the cytochrome b5 family.

The protein resides in the endoplasmic reticulum membrane. It is found in the microsome membrane. Functionally, membrane bound hemoprotein which function as an electron carrier for several membrane bound oxygenases. The protein is Probable cytochrome b5 of Neurospora crassa (strain ATCC 24698 / 74-OR23-1A / CBS 708.71 / DSM 1257 / FGSC 987).